The sequence spans 470 residues: Uronate isomerase (470 aa).

This sequence belongs to the metallo-dependent hydrolases superfamily. Uronate isomerase family.

The catalysed reaction is D-glucuronate = D-fructuronate. The enzyme catalyses aldehydo-D-galacturonate = keto-D-tagaturonate. It functions in the pathway carbohydrate metabolism; pentose and glucuronate interconversion. This chain is Uronate isomerase, found in Salmonella paratyphi A (strain ATCC 9150 / SARB42).